A 407-amino-acid chain; its full sequence is Zinc finger protein 260 (407 aa).

Disordered regions lie at residues 1–21, 39–72, and 96–124; these read MLES…PGES, VEHK…HLRS, and SHQK…RNQR. The C2H2-type 1 zinc-finger motif lies at 23-45; it reads YECNECKETFSLEQNFVEHKKTH. Basic and acidic residues-rich tracts occupy residues 39-51 and 100-111; these read VEHK…EKSP and QHTEERPSESKK. Residues 51-73 form a C2H2-type 2; degenerate zinc finger; that stretch reads PECTGCGEESSQASSLTLHLRSR. A C2H2-type 3 zinc finger spans residues 79–101; it reads YKCGECGKAFSQRGNFLSHQKQH. Over residues 115 to 124 the composition is skewed to polar residues; sequence PMTTTVRNQR. 10 consecutive C2H2-type zinc fingers follow at residues 131–153, 159–181, 187–209, 215–237, 243–265, 271–293, 299–321, 327–349, 355–377, and 383–405; these read YACK…EKIH, FECS…QNIH, FKCN…QRIH, YECK…QRSH, YTCK…EKIH, YKCN…HNIH, YECN…VRIH, YECK…MRSH, YGCN…MRIH, and YQCS…QRIH.

This sequence belongs to the krueppel C2H2-type zinc-finger protein family. In terms of assembly, binds DNA. Interacts with GATA4. Predominantly present in heart. Outside the heart, it is detected in embryonic and postnatal vascular smooth muscle cells and in epithelial cells of the lung, gut and kidney at sites of epithelial morphogenesis and in the spinal cord (at protein level).

The protein resides in the nucleus. Transcription factor that acts as a cardiac regulator and an effector of alpha1-adrenergic signaling. Binds to PE response elements (PERE) present in the promoter of genes such as ANF/NPPA and acts as a direct transcriptional activator of NPPA. Also acts as a cofactor with GATA4, a key cardiac regulator. The sequence is that of Zinc finger protein 260 (Znf260) from Mus musculus (Mouse).